Consider the following 710-residue polypeptide: Probable threonine--tRNA ligase 1, cytoplasmic (710 aa).

Residues 1-35 form a disordered region; it reads MSDSQENKPVETPTEVKPVAEKKPAAEKKEKKPAV. Residues 18–33 show a composition bias toward basic and acidic residues; it reads PVAEKKPAAEKKEKKP. The region spanning 72 to 137 is the TGS domain; the sequence is KEEPINVTLP…EADCNLQLCK (66 aa).

Belongs to the class-II aminoacyl-tRNA synthetase family.

The protein resides in the cytoplasm. The enzyme catalyses tRNA(Thr) + L-threonine + ATP = L-threonyl-tRNA(Thr) + AMP + diphosphate + H(+). This chain is Probable threonine--tRNA ligase 1, cytoplasmic (thrS1), found in Dictyostelium discoideum (Social amoeba).